The primary structure comprises 92 residues: Acylphosphatase (92 aa).

The region spanning 5 to 90 (TWRLVAHGRV…GEFAGFEFRP (86 aa)) is the Acylphosphatase-like domain. Catalysis depends on residues Arg20 and Asn38.

The protein belongs to the acylphosphatase family.

The catalysed reaction is an acyl phosphate + H2O = a carboxylate + phosphate + H(+). The chain is Acylphosphatase (acyP) from Cupriavidus necator (strain ATCC 17699 / DSM 428 / KCTC 22496 / NCIMB 10442 / H16 / Stanier 337) (Ralstonia eutropha).